A 944-amino-acid polypeptide reads, in one-letter code: MATPSMMPQWAYMHIAGQDASGYLSPGLVQFARATDTYFSMGNKFRNPTVAPTHDVTTDRSQRLMLRFVPVDREDNTYSYKVRYTLAVGDNRVLDMASTFFDIRGVLDRGPSFKPYSGTAYNSLAPKGAPNTSQWIVTTNGDNAVTTTTNTFGIASMKGGNITKEGLQIGKDITTTEGEEKPIYADKTYQPEPQVGEESWTDTDGTNEKFGGRALKPATNMKPCYGSFARPTNIKGGQAKNRKVKPTTEGGVETEEPDIDMEFFDGRDAVAGALAPEIVLYTENVNLETPDSHVVYKPETSNNSHANLGQQAMPNRPNYIGFRDNFVGLMYYNSTGNMGVLAGQASQLNAVVDLQDRNTELSYQLLLDSLGDRTRYFSMWNQAVDSYDPDVRIIENHGIEDELPNYCFPLNGIGPGHTYQGIKVKTDDTNGWEKDANVAPANEITIGNNLAMEINIQANLWRSFLYSNVALYLPDVYKYTPPNITLPTNTNTYEYMNGRVVSPSLVDSYINIGARWSLDPMDNVNPFNHHRNAGLRYRSMLLGNGRYVPFHIQVPQKFFAVKNLLLLPGSYTYEWNFRKDVNMVLQSSLGNDLRTDGATISFTSINLYATFFPMAHNTASTLEAMLRNDTNDQSFNDYLSAANMLYPIPANATNIPISIPSRNWAAFRGWSFTRLKTKETPSLGSGFDPYFVYSGSIPYLDGTFYLNHTFKKVAIMFDSSVSWPGNDRLLSPNEFEIKRTVDGEGYNVAQCNMTKDWFLVQMLANYNIGYQGFYIPEGYKDRMYSFFRNFQPMSRQVVDEVNYTDYKAVTLPYQHNNSGFVGYLAPTMRQGEPYPANYPYPLIGTTAVKSVTQKKFLCDRTMWRIPFSSNFMSMGALTDLGQNMLYANSAHALDMTFEVDPMDEPTLLYLLFEVFDVVRVHQPHRGVIEAVYLRTPFSAGNATT.

Ala-2 carries the post-translational modification N-acetylalanine; by host. Disordered regions lie at residues 193 to 216 and 229 to 253; these read PQVG…RALK and ARPT…GGVE. Tyr-932 is modified (phosphotyrosine; by host).

Belongs to the adenoviridae hexon protein family. In terms of assembly, homotrimer. Interacts with the capsid vertex protein; this interaction binds the peripentonal hexons to the neighboring penton base. Interacts with the hexon-linking protein; this interaction tethers the hexons surrounding the penton to those situated in the central plate of the facet. Interacts with the hexon-interlacing protein; this interaction lashes the hexons together. Interacts with host dyneins DYNC1LI1 and DYNC1I2; this interaction might be involved in intracellular microtubule-dependent transport of incoming viral capsid. Interacts with the shutoff protein; this interaction allows folding and formation of hexons trimers. Interacts with pre-protein VI; this interaction probably allows nuclear import of hexon trimers and possibly pre-capsid assembly.

The protein resides in the virion. Its subcellular location is the host nucleus. In terms of biological role, major capsid protein that self-associates to form 240 hexon trimers, each in the shape of a hexagon, building most of the pseudo T=25 capsid. Assembled into trimeric units with the help of the chaperone shutoff protein. Transported by pre-protein VI to the nucleus where it associates with other structural proteins to form an empty capsid. Might be involved, through its interaction with host dyneins, in the intracellular microtubule-dependent transport of incoming viral capsid to the nucleus. This Human adenovirus B serotype 3 (HAdV-3) protein is Hexon protein.